The chain runs to 308 residues: Urease subunit beta (308 aa).

The Urease domain maps to 131-308 (GGIDTHIHFI…STNPTIPFTK (178 aa)). Positions 136, 138, 219, 248, and 274 each coordinate Ni(2+). Lys-219 is modified (N6-carboxylysine).

The protein belongs to the metallo-dependent hydrolases superfamily. Urease alpha subunit family. Heterohexamer of 3 UreA (alpha) and 3 UreB (beta) subunits. Requires Ni cation as cofactor. Carboxylation allows a single lysine to coordinate two nickel ions.

It is found in the cytoplasm. It catalyses the reaction urea + 2 H2O + H(+) = hydrogencarbonate + 2 NH4(+). It functions in the pathway nitrogen metabolism; urea degradation; CO(2) and NH(3) from urea (urease route): step 1/1. This is Urease subunit beta (ureB) from Helicobacter mustelae.